The primary structure comprises 278 residues: Thiazole synthase (278 aa).

K109 (schiff-base intermediate with DXP) is an active-site residue. 1-deoxy-D-xylulose 5-phosphate-binding positions include G170, 197-198 (AG), and 219-220 (NT).

The protein belongs to the ThiG family. In terms of assembly, homotetramer. Forms heterodimers with either ThiH or ThiS.

The protein resides in the cytoplasm. The catalysed reaction is [ThiS sulfur-carrier protein]-C-terminal-Gly-aminoethanethioate + 2-iminoacetate + 1-deoxy-D-xylulose 5-phosphate = [ThiS sulfur-carrier protein]-C-terminal Gly-Gly + 2-[(2R,5Z)-2-carboxy-4-methylthiazol-5(2H)-ylidene]ethyl phosphate + 2 H2O + H(+). The protein operates within cofactor biosynthesis; thiamine diphosphate biosynthesis. Its function is as follows. Catalyzes the rearrangement of 1-deoxy-D-xylulose 5-phosphate (DXP) to produce the thiazole phosphate moiety of thiamine. Sulfur is provided by the thiocarboxylate moiety of the carrier protein ThiS. In vitro, sulfur can be provided by H(2)S. The protein is Thiazole synthase of Cupriavidus taiwanensis (strain DSM 17343 / BCRC 17206 / CCUG 44338 / CIP 107171 / LMG 19424 / R1) (Ralstonia taiwanensis (strain LMG 19424)).